Consider the following 218-residue polypeptide: Hypoxanthine-guanine phosphoribosyltransferase (218 aa).

Alanine 2 carries the post-translational modification N-acetylalanine. Lysine 69 is a binding site for GMP. Residue lysine 103 is modified to N6-acetyllysine. A Glycyl lysine isopeptide (Lys-Gly) (interchain with G-Cter in SUMO1); alternate cross-link involves residue lysine 115. Lysine 115 is covalently cross-linked (Glycyl lysine isopeptide (Lys-Gly) (interchain with G-Cter in SUMO2); alternate). Residues 134 to 142 (EDIIDTGKT), lysine 166, 186 to 188 (KFV), and aspartate 194 contribute to the GMP site. The Proton acceptor role is filled by aspartate 138. Threonine 142 carries the post-translational modification Phosphothreonine. Aspartate 194 serves as a coordination point for Mg(2+).

It belongs to the purine/pyrimidine phosphoribosyltransferase family. In terms of assembly, homotetramer. It depends on Mg(2+) as a cofactor.

The protein resides in the cytoplasm. The enzyme catalyses IMP + diphosphate = hypoxanthine + 5-phospho-alpha-D-ribose 1-diphosphate. The catalysed reaction is GMP + diphosphate = guanine + 5-phospho-alpha-D-ribose 1-diphosphate. The protein operates within purine metabolism; IMP biosynthesis via salvage pathway; IMP from hypoxanthine: step 1/1. Functionally, converts guanine to guanosine monophosphate, and hypoxanthine to inosine monophosphate. Transfers the 5-phosphoribosyl group from 5-phosphoribosylpyrophosphate onto the purine. Plays a central role in the generation of purine nucleotides through the purine salvage pathway. The chain is Hypoxanthine-guanine phosphoribosyltransferase (HPRT1) from Bos taurus (Bovine).